Consider the following 63-residue polypeptide: Acrosin inhibitor 1 (63 aa).

Residues 8–63 (FGFPPDCKVYTEACTREYNPICDSAAKTYSNECTFCNEKMNNDADIHFNHFGECEY) form the Kazal-like domain. 3 cysteine pairs are disulfide-bonded: C14–C43, C21–C40, and C29–C61.

In terms of tissue distribution, seminal plasma.

Its subcellular location is the secreted. Functionally, strong inhibitor of acrosin. The chain is Acrosin inhibitor 1 from Bos taurus (Bovine).